Consider the following 31-residue polypeptide: MLTITSYFGFLLAVLIITSSLFIGLSKIQLI.

Residues 4–24 (ITSYFGFLLAVLIITSSLFIG) form a helical membrane-spanning segment.

It belongs to the PetL family. In terms of assembly, the 4 large subunits of the cytochrome b6-f complex are cytochrome b6, subunit IV (17 kDa polypeptide, PetD), cytochrome f and the Rieske protein, while the 4 small subunits are PetG, PetL, PetM and PetN. The complex functions as a dimer.

The protein localises to the plastid. Its subcellular location is the chloroplast thylakoid membrane. Functionally, component of the cytochrome b6-f complex, which mediates electron transfer between photosystem II (PSII) and photosystem I (PSI), cyclic electron flow around PSI, and state transitions. PetL is important for photoautotrophic growth as well as for electron transfer efficiency and stability of the cytochrome b6-f complex. This chain is Cytochrome b6-f complex subunit 6, found in Phaseolus vulgaris (Kidney bean).